A 161-amino-acid polypeptide reads, in one-letter code: Nucleotide-binding protein NE2248 (161 aa).

This sequence belongs to the YajQ family.

Its function is as follows. Nucleotide-binding protein. The sequence is that of Nucleotide-binding protein NE2248 from Nitrosomonas europaea (strain ATCC 19718 / CIP 103999 / KCTC 2705 / NBRC 14298).